The sequence spans 305 residues: GMP synthase [glutamine-hydrolyzing] subunit B (305 aa).

Positions 2–184 (VDANAFIDEA…LPLPEEISER (183 aa)) constitute a GMPS ATP-PPase domain. 29–35 (SGGVDSS) provides a ligand contact to ATP.

In terms of assembly, heterodimer composed of a glutamine amidotransferase subunit (A) and a GMP-binding subunit (B).

The enzyme catalyses XMP + L-glutamine + ATP + H2O = GMP + L-glutamate + AMP + diphosphate + 2 H(+). It participates in purine metabolism; GMP biosynthesis; GMP from XMP (L-Gln route): step 1/1. Functionally, catalyzes the synthesis of GMP from XMP. The protein is GMP synthase [glutamine-hydrolyzing] subunit B of Methanocella arvoryzae (strain DSM 22066 / NBRC 105507 / MRE50).